The following is a 707-amino-acid chain: NADP(+)-dependent formate dehydrogenase subunit beta (707 aa).

In terms of assembly, heterotetramer composed of two alpha (FdhA) and two beta (FdhB) subunits.

It localises to the cytoplasm. The catalysed reaction is formate + NADP(+) = CO2 + NADPH. Its activity is regulated as follows. Activity is very sensitive to oxygen. The activity in growing cells is enhanced when selenite and molybdate are added together to the growth medium. Tungstate replaces and is better than molybdate. Selenite is incorporated into the enzyme. Requires a sulfhydryl compound for activity. Inhibited by cyanide, EDTA, hypophosphite and mercaptoethanol. Sulfite inhibits the activity with NADP but not with methyl viologen as electron acceptor. Component of a dehydrogenase that catalyzes the NADP-dependent reduction of CO(2) to formate, the first step in the synthesis of the methyl group of acetate during synthesis of acetate from CO(2). In vitro, can use methyl viologen and benzyl viologen in addition to its natural electron acceptor. In Moorella thermoacetica (Clostridium thermoaceticum), this protein is NADP(+)-dependent formate dehydrogenase subunit beta.